The following is a 182-amino-acid chain: CDP-diacylglycerol--glycerol-3-phosphate 3-phosphatidyltransferase (182 aa).

Residues glutamine 2–phenylalanine 12 are Cytoplasmic-facing. Residues arginine 13–leucine 37 form a helical membrane-spanning segment. The Periplasmic portion of the chain corresponds to isoleucine 38–threonine 60. Residues arginine 61–leucine 81 form a helical membrane-spanning segment. Residues valine 82–tyrosine 86 are Cytoplasmic-facing. A helical membrane pass occupies residues histidine 87–alanine 107. Residues leucine 108–proline 145 are Periplasmic-facing. Residues asparagine 146 to methionine 168 traverse the membrane as a helical segment. Over leucine 169–aspartate 181 the chain is Cytoplasmic.

This sequence belongs to the CDP-alcohol phosphatidyltransferase class-I family.

The protein localises to the cell inner membrane. It catalyses the reaction a CDP-1,2-diacyl-sn-glycerol + sn-glycerol 3-phosphate = a 1,2-diacyl-sn-glycero-3-phospho-(1'-sn-glycero-3'-phosphate) + CMP + H(+). Its pathway is phospholipid metabolism; phosphatidylglycerol biosynthesis; phosphatidylglycerol from CDP-diacylglycerol: step 1/2. Catalyzes the conversion of cytidine diphosphate diacylglycerol (CDP-DG) and glycerol 3-phosphate into phosphatidylglycerol. Essential for the synthesis of anionic phospholipids, thereby playing a role in balancing the ratio of zwitterionic and anionic phospholipids, which is thought to be important for normal membrane function. The sequence is that of CDP-diacylglycerol--glycerol-3-phosphate 3-phosphatidyltransferase from Shigella boydii serotype 4 (strain Sb227).